The primary structure comprises 64 residues: Frontoxin V (64 aa).

Intrachain disulfides connect Cys-3-Cys-24, Cys-6-Cys-11, Cys-17-Cys-41, Cys-45-Cys-57, and Cys-58-Cys-63.

Expressed by the venom gland.

The protein resides in the secreted. In terms of biological role, produces peripheral paralysis by blocking neuromuscular transmission at the postsynaptic site. Binds to the muscular nicotinic acetylcholine receptor (nAChR). This is Frontoxin V from Micrurus frontalis (Coral snake).